Consider the following 423-residue polypeptide: UDP-N-acetylglucosamine 1-carboxyvinyltransferase (423 aa).

Residue 22-23 (KN) participates in phosphoenolpyruvate binding. A UDP-N-acetyl-alpha-D-glucosamine-binding site is contributed by Arg93. Residue Cys117 is the Proton donor of the active site. Cys117 is modified (2-(S-cysteinyl)pyruvic acid O-phosphothioketal). UDP-N-acetyl-alpha-D-glucosamine is bound by residues 122 to 126 (RPIDL), Asp307, and Val329.

Belongs to the EPSP synthase family. MurA subfamily.

It is found in the cytoplasm. It catalyses the reaction phosphoenolpyruvate + UDP-N-acetyl-alpha-D-glucosamine = UDP-N-acetyl-3-O-(1-carboxyvinyl)-alpha-D-glucosamine + phosphate. It functions in the pathway cell wall biogenesis; peptidoglycan biosynthesis. In terms of biological role, cell wall formation. Adds enolpyruvyl to UDP-N-acetylglucosamine. The polypeptide is UDP-N-acetylglucosamine 1-carboxyvinyltransferase (Chlorobium chlorochromatii (strain CaD3)).